The chain runs to 1279 residues: MVTINDLHYSDPIDEDNIINMRIPLYDLEVDDQFINHNVPDLKAFQVFPNVWVVPERYTFYSTMKNLDAPANPSRSSYYDPTYLQSDAEKEVFLQQMILLFKRINSTQEGQQFLNLLSRSIPVPYESNGDVAMGTTQVIKQMDDKGNVLKHRRAHIIIYGPGPDLMAKGSKALTKSRETGRGCMAEIYFSPMYHKTYSTKLTNKNSLVDKSVQEFVPDPAVTLIHELCHGLHALYGIDLGNVGSWEFNSNPNSLFSSWFSSKEAVNFEEVMTFGGEDVKVIKSEIDKKIPGILNLIKTTVEPIINKITDPHDEMLQCLQSKYPSLKGTLGQFFFDDTQLEKDIRDLWMVMNETMFAENLKALTRARYLVPKVENIVQVDILSPNVYTIDKGFNHLSKGFKGQSVSQSYFRKISALARGAVVRACPNPHFSSQRGLSSCIEILEDDLFIMSSKDSFTDTDFSEPSVGPVSYKAKKGADTILDSTLSNYDFSKEINFTSTVPIITVEDPLETDEDVPVISEDRTVYVDDYTTFHFLEAQKIGKEVVPTQTKVVFTTNMEEALFDSKKVYTVFENTASRINEAGTGIANGMMFYQWLKGIVQDFTEEATQKDTFDKISDVTMIVPYLGNILNIGNDIRKGDFMGAVELGGVTILLEAIPELTLPVLIGLTIIEDELEKEQVSQTVYNVLDKRDEKWEEVYGFVKQQWWWMVHTQFETRILHAYQALNHQVEAIKANMTYQLANYRGNQEDKELLEKAIDDTLQSLYYAVDQAMHNIKRFLIQSSKSYLLNQMLPKTKEQLLAFDQQTLRNVNDFINKNQGVLGESLAKDLKKKVEKRLTSLPVFNLEDLPISEFEDLIHSHEIDIQDSEVLNIGVNNGKIQDLSGENTPLTLGENLHIVNGRDNQAVRLNNQLDSKLEIQSRPNIHFTAFEDFSISIWIRCSMLRNNRNRGQKYTIIQQFNKYGWQLAIQDSVFVWTLHDTFNNQIQLTSGSALTNKNYLLQNFWLHITVTNKRSEKSRLYINGVLQDQKDISVLGNCHPKEPILFSIQDNSDPNYFVRFEQFNVYRKALTDSEVNRLYWKYFEGSYLRDVWGERLTYNRDYYMQLSTLPGRGIKREYRTWSGFDYIILSELGTQKIPTHEVTYPKLYQGQKITIHSDGKNLEPHVKSNKNIRLKIDDFYIGVVNPFKLPEWRPESGAYVVTTYNHAEDLCLYFRTRSSSQSLYYGQLIMNDGRNKSLLNYTLKGSTYWIWSSAWYYENYNTSSKTAGNWYFIPVDEGWKED.

H225 serves as a coordination point for Zn(2+). E226 is an active-site residue. 2 residues coordinate Zn(2+): H229 and E269. C424 and C438 are joined by a disulfide. The segment at 435–843 is translocation domain (TD); sequence LSSCIEILED…RLTSLPVFNL (409 aa). The segment at 476–525 is belt; not required for channel formation; sequence ADTILDSTLSNYDFSKEINFTSTVPIITVEDPLETDEDVPVISEDRTVYV. Positions 860-1080 are N-terminus of receptor binding domain (N-RBD); it reads IDIQDSEVLN…EVNRLYWKYF (221 aa). Residues 1081-1279 are C-terminus of receptor binding domain (C-RBD); that stretch reads EGSYLRDVWG…IPVDEGWKED (199 aa). A Host ganglioside-binding motif motif is present at residues 1250–1253; that stretch reads SAWY.

This sequence belongs to the peptidase M27 family. As to quaternary structure, might be a disulfide-linked heterodimer of a light chain (LC) and heavy chain (HC). Zn(2+) is required as a cofactor.

It is found in the secreted. Its subcellular location is the host cytoplasm. The protein localises to the host cytosol. The protein resides in the host cell membrane. It localises to the host cytoplasmic vesicle membrane. The catalysed reaction is Limited hydrolysis of proteins of the neuroexocytosis apparatus, synaptobrevins, SNAP25 or syntaxin. No detected action on small molecule substrates.. Functionally, strongly resembles a botulinum-type toxin, with the appropriate domains and residues to have proteolytic function, although its C-terminus (which binds to a eukaryotic host cell) is different enough from clostrial botulinum toxins that it might bind another cell target. Might be a precursor of a toxin that binds to an unknown eukaryotic cell receptor(s), and be taken up into the host cell via the endocytic pathway. When the pH of the putative toxin-containing endosome drops a structural rearrangement occurs so that the N-terminus of the heavy chain forms pores that allows the light chain to translocate into the cytosol. Once in the cytosol the disulfide bond linking the 2 subunits is reduced and light chain cleaves its target protein. This Enterococcus sp. (strain 3G1_DIV0629) protein is Botulinum-like toxin eBoNT/J.